A 297-amino-acid polypeptide reads, in one-letter code: MNLGTLVSETRNPQTMDLDALSTPELVKRFNEQDTLVAEAVKATLPDVARAVDAAAAALKSGGRIIYMGAGTSGRLGVLDASECPPTFGVPHGLVVGLIAGGPGALLKAVEGAEDSQQAGEDDLVALNLQEQDLVVGLAASGRTPYVIGGLRYARQSGCTTVAVSCNPDSPIAREANIAISPVVGPEALTGSTRLKSGTAQKMVLNMISTGAMVKFGKVYQNLMVDMKATNVKLVDRACRMVVEATGIGREEAETLLKQTDFEVKPAILMALTGLDAAAAREKLAAHQGFLRAALEH.

The SIS domain occupies 55–218 (AAAALKSGGR…STGAMVKFGK (164 aa)). Catalysis depends on Glu-83, which acts as the Proton donor. Glu-114 is an active-site residue.

The protein belongs to the GCKR-like family. MurNAc-6-P etherase subfamily. In terms of assembly, homodimer.

It catalyses the reaction N-acetyl-D-muramate 6-phosphate + H2O = N-acetyl-D-glucosamine 6-phosphate + (R)-lactate. Its pathway is amino-sugar metabolism; 1,6-anhydro-N-acetylmuramate degradation. The protein operates within amino-sugar metabolism; N-acetylmuramate degradation. It functions in the pathway cell wall biogenesis; peptidoglycan recycling. In terms of biological role, specifically catalyzes the cleavage of the D-lactyl ether substituent of MurNAc 6-phosphate, producing GlcNAc 6-phosphate and D-lactate. Together with AnmK, is also required for the utilization of anhydro-N-acetylmuramic acid (anhMurNAc) either imported from the medium or derived from its own cell wall murein, and thus plays a role in cell wall recycling. This chain is N-acetylmuramic acid 6-phosphate etherase, found in Salmonella typhi.